The chain runs to 98 residues: PqqA binding protein (98 aa).

It belongs to the PqqD family. Monomer. Interacts with PqqE.

The protein operates within cofactor biosynthesis; pyrroloquinoline quinone biosynthesis. Functionally, functions as a PqqA binding protein and presents PqqA to PqqE, in the pyrroloquinoline quinone (PQQ) biosynthetic pathway. The protein is PqqA binding protein of Pseudomonas syringae pv. tomato (strain ATCC BAA-871 / DC3000).